Consider the following 301-residue polypeptide: tRNA pseudouridine synthase B (301 aa).

Aspartate 47 acts as the Nucleophile in catalysis.

The protein belongs to the pseudouridine synthase TruB family. Type 1 subfamily.

It carries out the reaction uridine(55) in tRNA = pseudouridine(55) in tRNA. Responsible for synthesis of pseudouridine from uracil-55 in the psi GC loop of transfer RNAs. The protein is tRNA pseudouridine synthase B of Cereibacter sphaeroides (strain ATCC 17023 / DSM 158 / JCM 6121 / CCUG 31486 / LMG 2827 / NBRC 12203 / NCIMB 8253 / ATH 2.4.1.) (Rhodobacter sphaeroides).